We begin with the raw amino-acid sequence, 257 residues long: Peptide methionine sulfoxide reductase (257 aa).

A disordered region spans residues 61-88 (LGFGSRPQPDPAASSAIAQGPDDDVPSP). Phosphoserine is present on Ser244.

It belongs to the MsrA Met sulfoxide reductase family.

The enzyme catalyses L-methionyl-[protein] + [thioredoxin]-disulfide + H2O = L-methionyl-(S)-S-oxide-[protein] + [thioredoxin]-dithiol. It catalyses the reaction [thioredoxin]-disulfide + L-methionine + H2O = L-methionine (S)-S-oxide + [thioredoxin]-dithiol. Has an important function as a repair enzyme for proteins that have been inactivated by oxidation. Catalyzes the reversible oxidation-reduction of methionine sulfoxide in proteins to methionine. The chain is Peptide methionine sulfoxide reductase (PMSR) from Brassica napus (Rape).